The chain runs to 778 residues: Phenylalanine--tRNA ligase beta subunit (778 aa).

The region spanning 39-150 (YEVPQKIVFG…GKYKIGEEVS (112 aa)) is the tRNA-binding domain. A B5 domain is found at 391 to 467 (HEDKIISLNK…RLVGIDNIPS (77 aa)). Residues D445, D451, E454, and E455 each coordinate Mg(2+). The region spanning 686-778 (SKYQASFRDL…LKNQLGVGIR (93 aa)) is the FDX-ACB domain.

Belongs to the phenylalanyl-tRNA synthetase beta subunit family. Type 1 subfamily. In terms of assembly, tetramer of two alpha and two beta subunits. The cofactor is Mg(2+).

Its subcellular location is the cytoplasm. It catalyses the reaction tRNA(Phe) + L-phenylalanine + ATP = L-phenylalanyl-tRNA(Phe) + AMP + diphosphate + H(+). The chain is Phenylalanine--tRNA ligase beta subunit from Sulfurimonas denitrificans (strain ATCC 33889 / DSM 1251) (Thiomicrospira denitrificans (strain ATCC 33889 / DSM 1251)).